Reading from the N-terminus, the 271-residue chain is Ribosomal RNA small subunit methyltransferase A (271 aa).

Positions 20, 45, 66, 90, and 112 each coordinate S-adenosyl-L-methionine.

Belongs to the class I-like SAM-binding methyltransferase superfamily. rRNA adenine N(6)-methyltransferase family. RsmA subfamily.

It localises to the cytoplasm. The catalysed reaction is adenosine(1518)/adenosine(1519) in 16S rRNA + 4 S-adenosyl-L-methionine = N(6)-dimethyladenosine(1518)/N(6)-dimethyladenosine(1519) in 16S rRNA + 4 S-adenosyl-L-homocysteine + 4 H(+). Specifically dimethylates two adjacent adenosines (A1518 and A1519) in the loop of a conserved hairpin near the 3'-end of 16S rRNA in the 30S particle. May play a critical role in biogenesis of 30S subunits. This chain is Ribosomal RNA small subunit methyltransferase A, found in Blochmanniella floridana.